A 432-amino-acid chain; its full sequence is D-amino acid dehydrogenase (432 aa).

Residue 3-17 (VVILGSGVVGVASAW) participates in FAD binding.

Belongs to the DadA oxidoreductase family. FAD serves as cofactor.

The enzyme catalyses a D-alpha-amino acid + A + H2O = a 2-oxocarboxylate + AH2 + NH4(+). It functions in the pathway amino-acid degradation; D-alanine degradation; NH(3) and pyruvate from D-alanine: step 1/1. Functionally, oxidative deamination of D-amino acids. The sequence is that of D-amino acid dehydrogenase from Klebsiella pneumoniae (strain 342).